The chain runs to 74 residues: Somatostatin-2 (74 aa).

The propeptide occupies 1–46 (ARGAGLLSQDWSAVEDLLAQMSLPEADAQREAEVVSVATGGRLNLE). A disulfide bridge connects residues Cys63 and Cys74.

It belongs to the somatostatin family.

It is found in the secreted. Somatostatin inhibits the release of somatotropin. The chain is Somatostatin-2 (sst2) from Myoxocephalus scorpius (Shorthorn sculpin).